The chain runs to 511 residues: Ribonuclease Y (511 aa).

The helical transmembrane segment at 3-23 threads the bilayer; that stretch reads VTIVASIACFIVGGILSYVLF. Positions 201 to 261 constitute a KH domain; that stretch reads SVTVFHIESD…VRREIARLAL (61 aa). One can recognise an HD domain in the interval 327–420; the sequence is LLQHARETAN…VQVCDAISGA (94 aa).

It belongs to the RNase Y family.

The protein resides in the cell membrane. Its function is as follows. Endoribonuclease that initiates mRNA decay. The polypeptide is Ribonuclease Y (Bacteroides fragilis (strain ATCC 25285 / DSM 2151 / CCUG 4856 / JCM 11019 / LMG 10263 / NCTC 9343 / Onslow / VPI 2553 / EN-2)).